A 467-amino-acid chain; its full sequence is 3-isopropylmalate dehydratase large subunit (467 aa).

Cys-349, Cys-409, and Cys-412 together coordinate [4Fe-4S] cluster.

The protein belongs to the aconitase/IPM isomerase family. LeuC type 1 subfamily. In terms of assembly, heterodimer of LeuC and LeuD. [4Fe-4S] cluster serves as cofactor.

It carries out the reaction (2R,3S)-3-isopropylmalate = (2S)-2-isopropylmalate. Its pathway is amino-acid biosynthesis; L-leucine biosynthesis; L-leucine from 3-methyl-2-oxobutanoate: step 2/4. Functionally, catalyzes the isomerization between 2-isopropylmalate and 3-isopropylmalate, via the formation of 2-isopropylmaleate. This is 3-isopropylmalate dehydratase large subunit from Vibrio cholerae serotype O1 (strain ATCC 39541 / Classical Ogawa 395 / O395).